The following is a 445-amino-acid chain: Chromosomal replication initiator protein DnaA (445 aa).

Positions 1–73 are domain I, interacts with DnaA modulators; it reads MSTHLTETWE…VNALKLLTSK (73 aa). Residues 73-106 form a domain II region; that stretch reads KKYNIDFIVTTEEKIEKNHNNEKSNIVVNDEMST. The interval 107 to 323 is domain III, AAA+ region; sequence MLNPKYTFDS…GALIRIVAFS (217 aa). The ATP site is built by Gly151, Gly153, Lys154, and Thr155. Positions 324–445 are domain IV, binds dsDNA; the sequence is SLTNKEISVD…KELNKRINQK (122 aa).

Belongs to the DnaA family. In terms of assembly, oligomerizes as a right-handed, spiral filament on DNA at oriC.

The protein resides in the cytoplasm. In terms of biological role, plays an essential role in the initiation and regulation of chromosomal replication. ATP-DnaA binds to the origin of replication (oriC) to initiate formation of the DNA replication initiation complex once per cell cycle. Binds the DnaA box (a 9 base pair repeat at the origin) and separates the double-stranded (ds)DNA. Forms a right-handed helical filament on oriC DNA; dsDNA binds to the exterior of the filament while single-stranded (ss)DNA is stabiized in the filament's interior. The ATP-DnaA-oriC complex binds and stabilizes one strand of the AT-rich DNA unwinding element (DUE), permitting loading of DNA polymerase. After initiation quickly degrades to an ADP-DnaA complex that is not apt for DNA replication. Binds acidic phospholipids. This Clostridium botulinum (strain Okra / Type B1) protein is Chromosomal replication initiator protein DnaA.